Here is a 364-residue protein sequence, read N- to C-terminus: Protein-glutamate methylesterase/protein-glutamine glutaminase (364 aa).

Residues 5–123 (RVLVVDDTIL…PAANKAALAN (119 aa)) form the Response regulatory domain. Asp-56 carries the 4-aspartylphosphate modification. Positions 174–364 (EIVVIGISTG…QEIVHTVKLY (191 aa)) constitute a CheB-type methylesterase domain. Active-site residues include Ser-181, His-208, and Asp-306.

It belongs to the CheB family. Post-translationally, phosphorylated by CheA. Phosphorylation of the N-terminal regulatory domain activates the methylesterase activity.

It is found in the cytoplasm. The catalysed reaction is [protein]-L-glutamate 5-O-methyl ester + H2O = L-glutamyl-[protein] + methanol + H(+). It catalyses the reaction L-glutaminyl-[protein] + H2O = L-glutamyl-[protein] + NH4(+). Involved in chemotaxis. Part of a chemotaxis signal transduction system that modulates chemotaxis in response to various stimuli. Catalyzes the demethylation of specific methylglutamate residues introduced into the chemoreceptors (methyl-accepting chemotaxis proteins or MCP) by CheR. Also mediates the irreversible deamidation of specific glutamine residues to glutamic acid. This Desulfotalea psychrophila (strain LSv54 / DSM 12343) protein is Protein-glutamate methylesterase/protein-glutamine glutaminase.